Reading from the N-terminus, the 75-residue chain is MKTCLVFAFFLVAVFAAVQAEENDSPQTLPRRLTVRAAQSFGRCNQKQCDADCVKKGYFGGLCTLTSCFCTGSRS.

A signal peptide spans 1–20 (MKTCLVFAFFLVAVFAAVQA). Residues 21–32 (EENDSPQTLPRR) constitute a propeptide that is removed on maturation. Intrachain disulfides connect cysteine 44-cysteine 63, cysteine 49-cysteine 68, and cysteine 53-cysteine 70.

It belongs to the invertebrate defensin family.

It is found in the secreted. In terms of biological role, has antibacterial activity. The protein is Defense protein 6 of Lonomia obliqua (Moth).